We begin with the raw amino-acid sequence, 334 residues long: Protein RecA (334 aa).

65–72 is an ATP binding site; that stretch reads GNESSGKT.

Belongs to the RecA family.

It localises to the cytoplasm. Its function is as follows. Can catalyze the hydrolysis of ATP in the presence of single-stranded DNA, the ATP-dependent uptake of single-stranded DNA by duplex DNA, and the ATP-dependent hybridization of homologous single-stranded DNAs. It interacts with LexA causing its activation and leading to its autocatalytic cleavage. In Ureaplasma parvum serovar 3 (strain ATCC 27815 / 27 / NCTC 11736), this protein is Protein RecA.